The following is a 120-amino-acid chain: Large ribosomal subunit protein uL24 (120 aa).

The protein belongs to the universal ribosomal protein uL24 family. In terms of assembly, part of the 50S ribosomal subunit.

In terms of biological role, one of two assembly initiator proteins, it binds directly to the 5'-end of the 23S rRNA, where it nucleates assembly of the 50S subunit. Located at the polypeptide exit tunnel on the outside of the subunit. The polypeptide is Large ribosomal subunit protein uL24 (Methanocaldococcus jannaschii (strain ATCC 43067 / DSM 2661 / JAL-1 / JCM 10045 / NBRC 100440) (Methanococcus jannaschii)).